Here is a 382-residue protein sequence, read N- to C-terminus: tRNA(Ile)-lysidine synthase (382 aa).

Residue 50 to 55 (SGGRDS) participates in ATP binding.

Belongs to the tRNA(Ile)-lysidine synthase family.

Its subcellular location is the cytoplasm. The catalysed reaction is cytidine(34) in tRNA(Ile2) + L-lysine + ATP = lysidine(34) in tRNA(Ile2) + AMP + diphosphate + H(+). Its function is as follows. Ligates lysine onto the cytidine present at position 34 of the AUA codon-specific tRNA(Ile) that contains the anticodon CAU, in an ATP-dependent manner. Cytidine is converted to lysidine, thus changing the amino acid specificity of the tRNA from methionine to isoleucine. In Bifidobacterium animalis subsp. lactis (strain AD011), this protein is tRNA(Ile)-lysidine synthase.